The following is a 152-amino-acid chain: Ribosome maturation factor RimP (152 aa).

Belongs to the RimP family.

It is found in the cytoplasm. Required for maturation of 30S ribosomal subunits. The polypeptide is Ribosome maturation factor RimP (Teredinibacter turnerae (strain ATCC 39867 / T7901)).